The chain runs to 757 residues: 5-methyltetrahydropteroyltriglutamate--homocysteine methyltransferase (757 aa).

5-methyltetrahydropteroyltri-L-glutamate-binding positions include 16 to 19 and Lys112; that span reads RELK. L-homocysteine is bound by residues 432–434 and Glu485; that span reads IGS. Residues 432–434 and Glu485 each bind L-methionine; that span reads IGS. Residues 516-517 and Trp562 each bind 5-methyltetrahydropteroyltri-L-glutamate; that span reads RC. Asp600 contacts L-homocysteine. Position 600 (Asp600) interacts with L-methionine. A 5-methyltetrahydropteroyltri-L-glutamate-binding site is contributed by Glu606. His642, Cys644, and Glu666 together coordinate Zn(2+). The active-site Proton donor is His695. Residue Cys727 coordinates Zn(2+).

Belongs to the vitamin-B12 independent methionine synthase family. Zn(2+) serves as cofactor.

It catalyses the reaction 5-methyltetrahydropteroyltri-L-glutamate + L-homocysteine = tetrahydropteroyltri-L-glutamate + L-methionine. It functions in the pathway amino-acid biosynthesis; L-methionine biosynthesis via de novo pathway; L-methionine from L-homocysteine (MetE route): step 1/1. In terms of biological role, catalyzes the transfer of a methyl group from 5-methyltetrahydrofolate to homocysteine resulting in methionine formation. The protein is 5-methyltetrahydropteroyltriglutamate--homocysteine methyltransferase of Actinobacillus pleuropneumoniae serotype 7 (strain AP76).